A 454-amino-acid chain; its full sequence is tRNA modification GTPase MnmE (454 aa).

(6S)-5-formyl-5,6,7,8-tetrahydrofolate-binding residues include Arg-23, Glu-80, and Lys-120. In terms of domain architecture, TrmE-type G spans Gly-216–Gly-377. Asn-226 is a K(+) binding site. Residues Asn-226–Ser-231, Thr-245–Thr-251, Asp-270–Gly-273, Asn-335–Asp-338, and Ser-358–Arg-360 each bind GTP. Mg(2+) is bound at residue Ser-230. Thr-245, Ile-247, and Thr-250 together coordinate K(+). Thr-251 is a Mg(2+) binding site. Lys-454 serves as a coordination point for (6S)-5-formyl-5,6,7,8-tetrahydrofolate.

The protein belongs to the TRAFAC class TrmE-Era-EngA-EngB-Septin-like GTPase superfamily. TrmE GTPase family. In terms of assembly, homodimer. Heterotetramer of two MnmE and two MnmG subunits. K(+) serves as cofactor.

It localises to the cytoplasm. Its function is as follows. Exhibits a very high intrinsic GTPase hydrolysis rate. Involved in the addition of a carboxymethylaminomethyl (cmnm) group at the wobble position (U34) of certain tRNAs, forming tRNA-cmnm(5)s(2)U34. The chain is tRNA modification GTPase MnmE from Erwinia tasmaniensis (strain DSM 17950 / CFBP 7177 / CIP 109463 / NCPPB 4357 / Et1/99).